A 624-amino-acid chain; its full sequence is Laccase-1 (624 aa).

Residues 1–20 form the signal peptide; sequence MRGVVKLFFLSCSLVSLVSS. Plastocyanin-like domains follow at residues 69–183 and 195–355; these read TKAL…HSPN and DRIV…VVRY. Residues H117, H119, H162, and H164 each coordinate Cu cation. A disulfide bond links C138 and C578. N242, N320, and N430 each carry an N-linked (GlcNAc...) asparagine glycan. Residues 469–562 enclose the Plastocyanin-like 3 domain; the sequence is IIINNLDGVI…GKLAVVVIQP (94 aa). H480, H483, and H485 together coordinate Cu cation. A glycan (N-linked (GlcNAc...) asparagine) is linked at N503. Cu cation is bound by residues H543, C544, H545, and H549. The interval 582–603 is disordered; the sequence is DPNAFGPARRSPSPSIQSSKTS. The segment covering 592-603 has biased composition (low complexity); that stretch reads SPSPSIQSSKTS.

It belongs to the multicopper oxidase family. Requires Cu cation as cofactor.

The protein resides in the secreted. It localises to the cell wall. It catalyses the reaction 4 hydroquinone + O2 = 4 benzosemiquinone + 2 H2O. Laccase that catalyzes the oxidation of certain aromatic compounds, including L-dopa, to quinones, which then polymerize to melanin. Able to oxidize a wide variety of aromatic diphenol and diamino groups in the ortho, meta, and para positions but not monophenolic groups such as in phenol, tyramine, or tyrosine. Plays an important role in virulence. Plays a role in dissemination to extrapulmonary sites but is not involved in pulmonary growth or in elicitation of cellular immune responses in the lung. This is Laccase-1 (LAC1) from Cryptococcus neoformans var. grubii serotype A (strain H99 / ATCC 208821 / CBS 10515 / FGSC 9487) (Filobasidiella neoformans var. grubii).